The sequence spans 580 residues: Putative ankyrin repeat protein L63 (580 aa).

ANK repeat units lie at residues S81–I110, D111–A140, N141–A170, N172–A200, D202–K230, S314–A339, S340–C369, G370–S399, G400–A429, N431–A459, D461–A489, G490–A519, D521–A549, and N551–P579.

This is Putative ankyrin repeat protein L63 from Acanthamoeba polyphaga (Amoeba).